We begin with the raw amino-acid sequence, 500 residues long: Organic cation/carnitine transporter 7 (500 aa).

At 1-23 (MADGNTRFTVDEALVAMGFGKFQ) the chain is on the cytoplasmic side. A helical membrane pass occupies residues 24–44 (IYVLAYAGMGWVAEAMEMMLL). Over 45–62 (SFVGPAVQSLWNLSARQE) the chain is Extracellular. N56 carries N-linked (GlcNAc...) asparagine glycosylation. Residues 63-83 (SLITSVVFAGMLIGAYSWGIV) form a helical membrane-spanning segment. At 84–97 (SDKHGRRKGFIITA) the chain is on the cytoplasmic side. The chain crosses the membrane as a helical span at residues 98-118 (VVTFVAGFLSAFSPNYMWLII). At 119–120 (LR) the chain is on the extracellular side. Residues 121–141 (CLVGLGLGGGPVLASWYLEFI) traverse the membrane as a helical segment. 137–144 (YLEFIPAP) contributes to the ATP binding site. Residues 142–150 (PAPSRGTWM) lie on the Cytoplasmic side of the membrane. Residues 151 to 171 (VVFSAFWTVGTIFEASLAWLV) traverse the membrane as a helical segment. Over 172-174 (MPR) the chain is Extracellular. The chain crosses the membrane as a helical span at residues 175-195 (LGWRWLLAFSSVPSSLLLLFY). Topologically, residues 196–293 (RWTSESPRYL…ALLSPTLMKR (98 aa)) are cytoplasmic. Residues 294–314 (TLLLWVVFFGNAFAYYGVVLL) traverse the membrane as a helical segment. At 315–341 (TTELNNSHNRCYPTEKQLRNSNDVNYR) the chain is on the extracellular side. N-linked (GlcNAc...) asparagine glycosylation is present at N319. The helical transmembrane segment at 342–362 (DVFIASFAEFPGLLISAAMVD) threads the bilayer. Topologically, residues 363–367 (RLGRK) are cytoplasmic. The helical transmembrane segment at 368-387 (ASMASMLFTCCIFLLPLLSH) threads the bilayer. Topologically, residues 388-401 (QSPFITTVLLFGGR) are extracellular. The helical transmembrane segment at 402 to 422 (ICISAAFTVVYIYAPEIYPTA) threads the bilayer. Residues 423–429 (VRTTGVG) lie on the Cytoplasmic side of the membrane. Residues 430–450 (VGSSVGRIGGILCPLVAVGLV) traverse the membrane as a helical segment. Residues 451-456 (HGCHQT) lie on the Extracellular side of the membrane. Residues 457-477 (IAVLLFEVVILVSGICVCLFP) traverse the membrane as a helical segment. Topologically, residues 478 to 500 (FETSGRDLTDSISASKEPPSASV) are cytoplasmic.

The protein belongs to the major facilitator (TC 2.A.1) superfamily. Organic cation transporter (TC 2.A.1.19) family. As to expression, expressed in pollen.

The protein localises to the membrane. High affinity carnitine transporter involved in the active cellular uptake of carnitine. Also transports organic cations. In Arabidopsis thaliana (Mouse-ear cress), this protein is Organic cation/carnitine transporter 7 (OCT7).